The primary structure comprises 552 residues: Thermosome subunit beta (552 aa).

The protein belongs to the TCP-1 chaperonin family. As to quaternary structure, forms a Heterooligomeric complex of two stacked nine-membered rings; one of alpha and the other of beta subunits. In terms of processing, the N-terminus is blocked.

Functionally, molecular chaperone; binds unfolded polypeptides in vitro, and has a weak ATPase activity. This is Thermosome subunit beta (thsB) from Sulfurisphaera tokodaii (strain DSM 16993 / JCM 10545 / NBRC 100140 / 7) (Sulfolobus tokodaii).